The following is a 151-amino-acid chain: Large ribosomal subunit protein bL9 (151 aa).

It belongs to the bacterial ribosomal protein bL9 family.

In terms of biological role, binds to the 23S rRNA. The chain is Large ribosomal subunit protein bL9 from Lactobacillus acidophilus (strain ATCC 700396 / NCK56 / N2 / NCFM).